The primary structure comprises 159 residues: Lipoprotein signal peptidase (159 aa).

The next 2 helical transmembrane spans lie at proline 59 to phenylalanine 79 and phenylalanine 87 to leucine 107. Residues aspartate 113 and aspartate 139 contribute to the active site. A helical transmembrane segment spans residues leucine 131–isoleucine 151.

Belongs to the peptidase A8 family.

The protein resides in the cell inner membrane. The catalysed reaction is Release of signal peptides from bacterial membrane prolipoproteins. Hydrolyzes -Xaa-Yaa-Zaa-|-(S,diacylglyceryl)Cys-, in which Xaa is hydrophobic (preferably Leu), and Yaa (Ala or Ser) and Zaa (Gly or Ala) have small, neutral side chains.. Its pathway is protein modification; lipoprotein biosynthesis (signal peptide cleavage). In terms of biological role, this protein specifically catalyzes the removal of signal peptides from prolipoproteins. The polypeptide is Lipoprotein signal peptidase (Chlorobium phaeobacteroides (strain BS1)).